The primary structure comprises 313 residues: Tyrosine--tRNA ligase (313 aa).

Residue Tyr32 participates in L-tyrosine binding. The 'HIGH' region motif lies at 37-45; that stretch reads PSGEIHLGH. Tyr152, Gln156, Asp159, and Gln174 together coordinate L-tyrosine. The 'KMSKS' region signature appears at 208 to 212; sequence KMSSS. Position 211 (Ser211) interacts with ATP.

The protein belongs to the class-I aminoacyl-tRNA synthetase family. TyrS type 3 subfamily. In terms of assembly, homodimer.

Its subcellular location is the cytoplasm. It carries out the reaction tRNA(Tyr) + L-tyrosine + ATP = L-tyrosyl-tRNA(Tyr) + AMP + diphosphate + H(+). Catalyzes the attachment of tyrosine to tRNA(Tyr) in a two-step reaction: tyrosine is first activated by ATP to form Tyr-AMP and then transferred to the acceptor end of tRNA(Tyr). The chain is Tyrosine--tRNA ligase from Methanospirillum hungatei JF-1 (strain ATCC 27890 / DSM 864 / NBRC 100397 / JF-1).